The primary structure comprises 258 residues: tRNA pseudouridine synthase A (258 aa).

Asp53 acts as the Nucleophile in catalysis. A substrate-binding site is contributed by Tyr111.

It belongs to the tRNA pseudouridine synthase TruA family. In terms of assembly, homodimer.

It catalyses the reaction uridine(38/39/40) in tRNA = pseudouridine(38/39/40) in tRNA. Its function is as follows. Formation of pseudouridine at positions 38, 39 and 40 in the anticodon stem and loop of transfer RNAs. The chain is tRNA pseudouridine synthase A from Streptococcus agalactiae serotype Ia (strain ATCC 27591 / A909 / CDC SS700).